We begin with the raw amino-acid sequence, 190 residues long: Major intrinsically disordered NOTCH2-binding receptor 1-like (190 aa).

A Phosphoserine modification is found at Ser-79. N-linked (GlcNAc...) asparagine glycans are attached at residues Asn-109 and Asn-125. A helical transmembrane segment spans residues 169-189 (GLILLVVISILVTIVTIITFF).

Belongs to the MINAR family. In terms of assembly, interacts with NOTCH2. Highly expressed in the auditory hair cells.

The protein resides in the lysosome membrane. It is found in the endoplasmic reticulum membrane. In terms of biological role, binds cholesterol and may regulate the distribution and homeostasis of cholesterol in hair cells. May play a role in angiogenesis. This is Major intrinsically disordered NOTCH2-binding receptor 1-like from Homo sapiens (Human).